We begin with the raw amino-acid sequence, 873 residues long: DNA mismatch repair protein MutS (873 aa).

Residue 601–608 (GPNMSGKS) participates in ATP binding.

This sequence belongs to the DNA mismatch repair MutS family.

Its function is as follows. This protein is involved in the repair of mismatches in DNA. It is possible that it carries out the mismatch recognition step. This protein has a weak ATPase activity. This Staphylococcus epidermidis (strain ATCC 12228 / FDA PCI 1200) protein is DNA mismatch repair protein MutS.